Here is a 66-residue protein sequence, read N- to C-terminus: Putative antitoxin APE_0279a.1 (66 aa).

The protein belongs to the UPF0165 family.

Functionally, possibly the antitoxin component of a type II toxin-antitoxin (TA) system. The polypeptide is Putative antitoxin APE_0279a.1 (Aeropyrum pernix (strain ATCC 700893 / DSM 11879 / JCM 9820 / NBRC 100138 / K1)).